The following is a 445-amino-acid chain: Histone acetyltransferase of the MYST family 2 (445 aa).

Polar residues predominate over residues 1–23 (MGSSANTETNGNAPPPSSNQKPP). The interval 1-58 (MGSSANTETNGNAPPPSSNQKPPATNGVDGSHPPPPPLTPDQAIIESDPSKKRKMGML) is disordered. Residues 60-118 (LEVGTRVMCRWRDGKHHPVKVIERRRIHNGGQNDYEYYVHYTEFNRRLDEWTQLDQLDL) form the Tudor-knot domain. The 272-residue stretch at 169-440 (TKVKNISTIE…VDASKLIWTP (272 aa)) folds into the MYST-type HAT domain. Residues 202 to 227 (LFFCEFCLNFMKRKEQLQRHMRKCDL) form a C2HC MYST-type zinc finger. An N6-acetyllysine; by autocatalysis modification is found at lysine 269. Acetyl-CoA is bound by residues 312-314 (ILT) and 319-325 (QRKGYGK). Glutamate 345 serves as the catalytic Proton donor/acceptor. Residue serine 349 participates in acetyl-CoA binding.

It belongs to the MYST (SAS/MOZ) family. In terms of assembly, interacts with MRG1 and MRG2. In terms of processing, autoacetylation at Lys-269 is required for proper function. In terms of tissue distribution, expressed in cotyledons, leaves, stems, roots and, at higher levels in developing flowers, particularly in the anthers and gynoecia. Constitutively expressed in all tissues, predominantly in shoot apical meristem.

Its subcellular location is the nucleus. It carries out the reaction L-lysyl-[protein] + acetyl-CoA = N(6)-acetyl-L-lysyl-[protein] + CoA + H(+). Its function is as follows. Histone acetyltransferase which may be involved in transcriptional activation. Acetylates 'Lys-5' of histone H4 (H4K5ac). Essential for gametophyte development. Negative regulator of flowering controlling the H4K5ac levels in the FLC chromatin. This chain is Histone acetyltransferase of the MYST family 2, found in Arabidopsis thaliana (Mouse-ear cress).